The following is a 145-amino-acid chain: 6-pyruvoyl tetrahydrobiopterin synthase (145 aa).

The residue at position 19 (Ser-19) is a Phosphoserine. His-24 serves as a coordination point for Zn(2+). The residue at position 28 (Ser-28) is a Phosphoserine. Residue Cys-43 is the Proton acceptor of the active site. Positions 49 and 51 each coordinate Zn(2+). The active-site Charge relay system is His-90. The residue at position 128 (Tyr-128) is a Phosphotyrosine. The Charge relay system role is filled by Glu-134.

Belongs to the PTPS family. In terms of assembly, homohexamer formed of two homotrimers in a head to head fashion. Requires Zn(2+) as cofactor. In terms of processing, phosphorylation of Ser-19 is required for maximal enzyme activity.

The catalysed reaction is 7,8-dihydroneopterin 3'-triphosphate = 6-pyruvoyl-5,6,7,8-tetrahydropterin + triphosphate + H(+). It functions in the pathway cofactor biosynthesis; tetrahydrobiopterin biosynthesis; tetrahydrobiopterin from 7,8-dihydroneopterin triphosphate: step 1/3. In terms of biological role, involved in the biosynthesis of tetrahydrobiopterin, an essential cofactor of aromatic amino acid hydroxylases. Catalyzes the transformation of 7,8-dihydroneopterin triphosphate into 6-pyruvoyl tetrahydropterin. The polypeptide is 6-pyruvoyl tetrahydrobiopterin synthase (PTS) (Pongo abelii (Sumatran orangutan)).